The chain runs to 269 residues: MDTHDNIITFNHVRFKYNSDEPLALNDVSFGIPKGKWTSIVGHNGSGKSTIAKLMVGIEKPSDGHIYFRNQCINQQNLSDLRQHIGIVFQNPENQFVGSTVAFDVAFGLENNSVSYDDMQRIVPKALEDVEMLDRADYEPQSLSGGQKQRVAIAGVLALNTDVIILDEATSMLDPAGRKELISLIHRLKEEKEVTIISITHDLTEAAEADYLVVLNDGEVYQTGKPHDVFNDGDGLTEIGLDLPFSIRMARTLLGSTDFITYEGLVKKI.

Positions 8–242 constitute an ABC transporter domain; that stretch reads ITFNHVRFKY…GDGLTEIGLD (235 aa). ATP is bound at residue 42-49; the sequence is GHNGSGKS.

This sequence belongs to the ABC transporter superfamily. Energy-coupling factor EcfA family. As to quaternary structure, forms a stable energy-coupling factor (ECF) transporter complex composed of 2 membrane-embedded substrate-binding proteins (S component), 2 ATP-binding proteins (A component) and 2 transmembrane proteins (T component).

The protein localises to the cell membrane. ATP-binding (A) component of a common energy-coupling factor (ECF) ABC-transporter complex. Unlike classic ABC transporters this ECF transporter provides the energy necessary to transport a number of different substrates. The polypeptide is Energy-coupling factor transporter ATP-binding protein EcfA1 (Staphylococcus saprophyticus subsp. saprophyticus (strain ATCC 15305 / DSM 20229 / NCIMB 8711 / NCTC 7292 / S-41)).